Reading from the N-terminus, the 663-residue chain is Transmembrane 9 superfamily member 2 (663 aa).

The N-terminal stretch at Met1–Pro28 is a signal peptide. The Lumenal segment spans residues Gly29 to Gln300. The helical transmembrane segment at Trp301–Ile321 threads the bilayer. Residues Met322–Gln374 lie on the Cytoplasmic side of the membrane. Residues Ile375 to Asn395 form a helical membrane-spanning segment. At Arg396–Ala398 the chain is on the lumenal side. A helical membrane pass occupies residues Leu399–Ala419. Residues Arg420–Thr437 are Cytoplasmic-facing. The chain crosses the membrane as a helical span at residues Ser438–Gly458. Residues Glu459–Pro466 lie on the Lumenal side of the membrane. The helical transmembrane segment at Phe467 to Ile487 threads the bilayer. Residues Gly488–Pro522 lie on the Cytoplasmic side of the membrane. The helical transmembrane segment at Gly523–Leu543 threads the bilayer. Over Asn544–Met554 the chain is Lumenal. A helical membrane pass occupies residues Phe555–Leu575. Residues Leu576–Arg591 lie on the Cytoplasmic side of the membrane. A helical membrane pass occupies residues Ser592–Phe612. Over Ser613–Met631 the chain is Lumenal. Residues Ile632–Phe652 form a helical membrane-spanning segment. Residues Val653–Asp663 are Cytoplasmic-facing.

Belongs to the nonaspanin (TM9SF) (TC 9.A.2) family.

It is found in the endosome membrane. The protein localises to the golgi outpost. It localises to the cytoplasm. Its subcellular location is the cytoskeleton. The protein resides in the microtubule organizing center. In terms of biological role, in the intracellular compartments, may function as a channel or small molecule transporter. In Pongo abelii (Sumatran orangutan), this protein is Transmembrane 9 superfamily member 2 (TM9SF2).